The primary structure comprises 235 residues: Probable membrane-associated kinase regulator 6 (235 aa).

The interval Ser108–Ser140 is disordered. Residues Gly130–Ser140 are compositionally biased toward polar residues.

It is found in the cell membrane. May be involved in abscisic acid signaling by acting as a kinase regulator. This is Probable membrane-associated kinase regulator 6 (MAKR6) from Arabidopsis thaliana (Mouse-ear cress).